A 315-amino-acid polypeptide reads, in one-letter code: Phosphatidylglycerol--prolipoprotein diacylglyceryl transferase (315 aa).

The next 2 helical transmembrane spans lie at 19-39 (FTIHMYAICILIGICVAVWIL) and 93-113 (VWEGGMAIFGGISVGTLVAFL). Arg-141 is an a 1,2-diacyl-sn-glycero-3-phospho-(1'-sn-glycerol) binding site. The next 2 membrane-spanning stretches (helical) occupy residues 188 to 208 (LFHPTFLYEMIWNLIGAALII) and 256 to 276 (MWTAIIVFVLGCILFVVLYQY).

This sequence belongs to the Lgt family.

The protein resides in the cell membrane. The enzyme catalyses L-cysteinyl-[prolipoprotein] + a 1,2-diacyl-sn-glycero-3-phospho-(1'-sn-glycerol) = an S-1,2-diacyl-sn-glyceryl-L-cysteinyl-[prolipoprotein] + sn-glycerol 1-phosphate + H(+). It participates in protein modification; lipoprotein biosynthesis (diacylglyceryl transfer). Its function is as follows. Catalyzes the transfer of the diacylglyceryl group from phosphatidylglycerol to the sulfhydryl group of the N-terminal cysteine of a prolipoprotein, the first step in the formation of mature lipoproteins. In Bifidobacterium longum subsp. infantis (strain ATCC 15697 / DSM 20088 / JCM 1222 / NCTC 11817 / S12), this protein is Phosphatidylglycerol--prolipoprotein diacylglyceryl transferase.